The sequence spans 48 residues: Large ribosomal subunit protein bL32 (48 aa).

Positions 24–48 are disordered; sequence LPMPIKDKDGSYKMPHRVNPVTKEY.

It belongs to the bacterial ribosomal protein bL32 family.

The sequence is that of Large ribosomal subunit protein bL32 from Campylobacter lari (strain RM2100 / D67 / ATCC BAA-1060).